A 290-amino-acid chain; its full sequence is Protein CREG2 (290 aa).

The first 31 residues, 1-31 (MSVRRGRRPARPGTRLSWLLCCSALLSPAAG), serve as a signal peptide directing secretion. Residues Asn-165 and Asn-166 are each glycosylated (N-linked (GlcNAc...) asparagine).

It belongs to the CREG family. In terms of processing, it is not sure whether N-glycosylation is on Asn-165 and/or Asn-166. Brain specific mainly in the limbic system and faintly in the spinal cord but not in cerebellum.

Its subcellular location is the secreted. In Homo sapiens (Human), this protein is Protein CREG2 (CREG2).